The primary structure comprises 106 residues: Small ribosomal subunit protein uS10 (106 aa).

The protein belongs to the universal ribosomal protein uS10 family. As to quaternary structure, part of the 30S ribosomal subunit.

Functionally, involved in the binding of tRNA to the ribosomes. This Prochlorococcus marinus subsp. pastoris (strain CCMP1986 / NIES-2087 / MED4) protein is Small ribosomal subunit protein uS10.